Here is a 119-residue protein sequence, read N- to C-terminus: Large ribosomal subunit protein uL18 (119 aa).

Positions Met1 to Ser23 are disordered. The segment covering Thr10–Gly20 has biased composition (basic residues).

Belongs to the universal ribosomal protein uL18 family. Part of the 50S ribosomal subunit; part of the 5S rRNA/L5/L18/L25 subcomplex. Contacts the 5S and 23S rRNAs.

This is one of the proteins that bind and probably mediate the attachment of the 5S RNA into the large ribosomal subunit, where it forms part of the central protuberance. The polypeptide is Large ribosomal subunit protein uL18 (Lacticaseibacillus casei (strain BL23) (Lactobacillus casei)).